The sequence spans 341 residues: uncharacterized protein (341 aa).

The segment covering 1-12 (NSRIAHVPKSKK) has biased composition (basic residues). Disordered stretches follow at residues 1 to 21 (NSRI…SPRF) and 291 to 317 (KARM…NPED). Residues 297–312 (SGKNYQQRPSRTTSPA) show a composition bias toward polar residues.

This is an uncharacterized protein from Lachancea kluyveri (strain ATCC 58438 / CBS 3082 / BCRC 21498 / NBRC 1685 / JCM 7257 / NCYC 543 / NRRL Y-12651) (Yeast).